The following is a 213-amino-acid chain: Kynurenine formamidase (213 aa).

Substrate is bound at residue Trp-18. Zn(2+) contacts are provided by His-48, His-52, and Asp-54. His-58 functions as the Proton donor/acceptor in the catalytic mechanism. Residues His-160 and Glu-172 each coordinate Zn(2+).

This sequence belongs to the Cyclase 1 superfamily. KynB family. In terms of assembly, homodimer. Zn(2+) is required as a cofactor.

It carries out the reaction N-formyl-L-kynurenine + H2O = L-kynurenine + formate + H(+). It functions in the pathway amino-acid degradation; L-tryptophan degradation via kynurenine pathway; L-kynurenine from L-tryptophan: step 2/2. In terms of biological role, catalyzes the hydrolysis of N-formyl-L-kynurenine to L-kynurenine, the second step in the kynurenine pathway of tryptophan degradation. In Burkholderia mallei (strain NCTC 10247), this protein is Kynurenine formamidase.